A 490-amino-acid chain; its full sequence is Betaine aldehyde dehydrogenase (490 aa).

3 residues coordinate K(+): Ser-26, Ile-27, and Asp-93. Residue 150–152 (GAW) coordinates NAD(+). Residue Lys-162 is the Charge relay system of the active site. NAD(+) contacts are provided by residues 176–179 (KPSE) and 230–233 (GVET). K(+) is bound at residue Leu-246. The active-site Proton acceptor is the Glu-252. NAD(+)-binding residues include Gly-254, Cys-286, and Glu-387. Catalysis depends on Cys-286, which acts as the Nucleophile. Cys-286 is modified (cysteine sulfenic acid (-SOH)). K(+) contacts are provided by Lys-457 and Gly-460. Glu-464 functions as the Charge relay system in the catalytic mechanism.

The protein belongs to the aldehyde dehydrogenase family. Dimer of dimers. It depends on K(+) as a cofactor.

It catalyses the reaction betaine aldehyde + NAD(+) + H2O = glycine betaine + NADH + 2 H(+). It functions in the pathway amine and polyamine biosynthesis; betaine biosynthesis via choline pathway; betaine from betaine aldehyde: step 1/1. Functionally, involved in the biosynthesis of the osmoprotectant glycine betaine. Catalyzes the irreversible oxidation of betaine aldehyde to the corresponding acid. The protein is Betaine aldehyde dehydrogenase of Acinetobacter baumannii (strain SDF).